The chain runs to 619 residues: 1-deoxy-D-xylulose-5-phosphate synthase (619 aa).

Thiamine diphosphate-binding positions include H74 and 115–117 (GHS). D146 contacts Mg(2+). Thiamine diphosphate is bound by residues 147–148 (GA), N175, Y285, and E365. A Mg(2+)-binding site is contributed by N175.

The protein belongs to the transketolase family. DXPS subfamily. Homodimer. Requires Mg(2+) as cofactor. Thiamine diphosphate serves as cofactor.

It catalyses the reaction D-glyceraldehyde 3-phosphate + pyruvate + H(+) = 1-deoxy-D-xylulose 5-phosphate + CO2. The protein operates within metabolic intermediate biosynthesis; 1-deoxy-D-xylulose 5-phosphate biosynthesis; 1-deoxy-D-xylulose 5-phosphate from D-glyceraldehyde 3-phosphate and pyruvate: step 1/1. In terms of biological role, catalyzes the acyloin condensation reaction between C atoms 2 and 3 of pyruvate and glyceraldehyde 3-phosphate to yield 1-deoxy-D-xylulose-5-phosphate (DXP). The chain is 1-deoxy-D-xylulose-5-phosphate synthase from Clostridium perfringens (strain SM101 / Type A).